A 73-amino-acid polypeptide reads, in one-letter code: Putative membrane protein insertion efficiency factor (73 aa).

The protein belongs to the UPF0161 family.

Its subcellular location is the cell inner membrane. Functionally, could be involved in insertion of integral membrane proteins into the membrane. This Dinoroseobacter shibae (strain DSM 16493 / NCIMB 14021 / DFL 12) protein is Putative membrane protein insertion efficiency factor.